The sequence spans 390 residues: 5-hydroxytryptamine receptor 1B (390 aa).

Over 1-46 the chain is Extracellular; sequence MEEPGAQCAPPXPAGSETWVPQANLSSAPSQNCSAKDYIYQDSIAL. 2 N-linked (GlcNAc...) asparagine glycosylation sites follow: Asn24 and Asn32. The chain crosses the membrane as a helical span at residues 47–72; sequence PWKVLLVMLLALITLATTLSNAFVIA. The Cytoplasmic portion of the chain corresponds to 73–86; sequence TVYRTRKLHTPANY. A helical membrane pass occupies residues 87–111; sequence LIASLAVTDLLVSILVMPISTMYTV. Over 112–119 the chain is Extracellular; it reads TGRWTLGQ. The chain crosses the membrane as a helical span at residues 120–145; the sequence is VVCDFWLSSDITCCTASILHLCVIAL. Cys122 and Cys199 are joined by a disulfide. The ergotamine site is built by Asp129 and Thr134. Residues 146–148 carry the DRY motif; important for ligand-induced conformation changes and signaling motif; that stretch reads DRY. Residues 146-165 are Cytoplasmic-facing; sequence DRYWAITDAVEYSAKRTPKR. The chain crosses the membrane as a helical span at residues 166-184; it reads AAVMIALVWVFSISISLPP. Residues 185–205 lie on the Extracellular side of the membrane; the sequence is FFWRQAKAEEEVSECVVNTDH. Position 201 (Val201) interacts with ergotamine. Residues 206–229 form a helical membrane-spanning segment; the sequence is ILYTVYSTVGAFYFPTLLLIALYG. Topologically, residues 230–315 are cytoplasmic; it reads RIYVEARSRI…AARERKATKT (86 aa). A compositionally biased stretch (polar residues) spans 259-272; the sequence is DSPGSTSSVTSINS. Residues 259–281 are disordered; the sequence is DSPGSTSSVTSINSRVPDVPSES. A helical membrane pass occupies residues 316-337; it reads LGIILGAFIVCWLPFFIISLVM. Topologically, residues 338–347 are extracellular; that stretch reads PICKDACWFH. A helical transmembrane segment spans residues 348–370; the sequence is LAIFDFFTWLGYLNSLINPIIYT. The short motif at 365–369 is the NPxxY motif; important for ligand-induced conformation changes and signaling element; sequence NPIIY. Residues 371 to 390 lie on the Cytoplasmic side of the membrane; sequence MSNEDFKQAFHKLIRFKCTS. Cys388 is lipidated: S-palmitoyl cysteine.

Belongs to the G-protein coupled receptor 1 family. As to quaternary structure, homodimer. Heterodimer with HTR1D. Post-translationally, phosphorylated. Desensitization of the receptor may be mediated by its phosphorylation. In terms of processing, palmitoylated.

It localises to the cell membrane. Its function is as follows. G-protein coupled receptor for 5-hydroxytryptamine (serotonin). Also functions as a receptor for ergot alkaloid derivatives, various anxiolytic and antidepressant drugs and other psychoactive substances, such as lysergic acid diethylamide (LSD). Ligand binding causes a conformation change that triggers signaling via guanine nucleotide-binding proteins (G proteins) and modulates the activity of downstream effectors, such as adenylate cyclase. HTR1B is coupled to G(i)/G(o) G alpha proteins and mediates inhibitory neurotransmission by inhibiting adenylate cyclase activity. Arrestin family members inhibit signaling via G proteins and mediate activation of alternative signaling pathways. Regulates the release of 5-hydroxytryptamine, dopamine and acetylcholine in the brain, and thereby affects neural activity, nociceptive processing, pain perception, mood and behavior. Besides, plays a role in vasoconstriction of cerebral arteries. This chain is 5-hydroxytryptamine receptor 1B (HTR1B), found in Gorilla gorilla gorilla (Western lowland gorilla).